The chain runs to 300 residues: Cation-efflux pump FieF (300 aa).

The next 4 helical transmembrane spans lie at A12–W32, L40–V60, A82–F102, and P114–F134. Zn(2+) is bound by residues D45 and D49. Zn(2+) contacts are provided by H153 and D157. 2 helical membrane-spanning segments follow: residues Q155–F175 and A178–G198.

Belongs to the cation diffusion facilitator (CDF) transporter (TC 2.A.4) family. FieF subfamily. In terms of assembly, homodimer.

It is found in the cell inner membrane. The catalysed reaction is Zn(2+)(in) + H(+)(out) = Zn(2+)(out) + H(+)(in). The enzyme catalyses Cd(2+)(in) + H(+)(out) = Cd(2+)(out) + H(+)(in). It catalyses the reaction Fe(2+)(in) + H(+)(out) = Fe(2+)(out) + H(+)(in). Divalent metal cation transporter which exports Zn(2+), Cd(2+) and possibly Fe(2+). May be involved in zinc and iron detoxification by efflux. This chain is Cation-efflux pump FieF, found in Yersinia pestis bv. Antiqua (strain Antiqua).